Consider the following 447-residue polypeptide: Phosphoglucosamine mutase (447 aa).

Ser-106 (phosphoserine intermediate) is an active-site residue. 4 residues coordinate Mg(2+): Ser-106, Asp-245, Asp-247, and Asp-249. Ser-106 is subject to Phosphoserine.

This sequence belongs to the phosphohexose mutase family. Mg(2+) serves as cofactor. In terms of processing, activated by phosphorylation.

The enzyme catalyses alpha-D-glucosamine 1-phosphate = D-glucosamine 6-phosphate. Its function is as follows. Catalyzes the conversion of glucosamine-6-phosphate to glucosamine-1-phosphate. This chain is Phosphoglucosamine mutase, found in Cupriavidus metallidurans (strain ATCC 43123 / DSM 2839 / NBRC 102507 / CH34) (Ralstonia metallidurans).